Reading from the N-terminus, the 540-residue chain is uncharacterized protein (540 aa).

Residues 1-61 are Cytoplasmic-facing; sequence MFSIFKKKTS…TNDSPWQDPT (61 aa). Residues 62–82 form a helical membrane-spanning segment; that stretch reads YFSSFGKELMFIATCMLAQLL. Over 83 to 108 the chain is Extracellular; it reads NQAGQTHALCIMNVLSKSFNSEANNQ. A helical membrane pass occupies residues 109–129; it reads AWLMASFPLAAGSFILISGRL. At 130-131 the chain is on the cytoplasmic side; that stretch reads GD. Residues 132–152 traverse the membrane as a helical segment; it reads IYGLKKMLIVGYVIVIVWSII. Over 153–169 the chain is Extracellular; the sequence is SGLSKYSNSDAFFITSR. The chain crosses the membrane as a helical span at residues 170–190; it reads AFQGVGIAFILPNIMGLVGHV. Topologically, residues 191-203 are cytoplasmic; it reads YKVGSFRKNIVIS. The chain crosses the membrane as a helical span at residues 204 to 224; that stretch reads FIGACAPTGGMFGGLFGGLIV. The Extracellular segment spans residues 225–232; sequence TEDPNQWP. The helical transmembrane segment at 233 to 253 threads the bilayer; sequence WVFYAFGIATFLSLLMAWYSI. Topologically, residues 254-272 are cytoplasmic; that stretch reads PNNVPTNIHGLSMDWTGSA. Residues 273 to 293 traverse the membrane as a helical segment; the sequence is LAIIGLILFNFVWNQAPIVGW. Residues 294-295 lie on the Extracellular side of the membrane; that stretch reads DK. The helical transmembrane segment at 296–316 threads the bilayer; it reads PYIIVLLIISVIFLVAFFVYE. Residues 317–334 are Cytoplasmic-facing; the sequence is SKYAEVPLLPRAMTKNRH. The chain crosses the membrane as a helical span at residues 335 to 355; it reads MIMILLAVFLGWGSFGIWTFY. At 356-372 the chain is on the extracellular side; sequence YVSFQLNLRHYSPVWTG. Residues 373 to 393 traverse the membrane as a helical segment; the sequence is GTYFVFVIFGSMAAFFVAFSI. At 394 to 398 the chain is on the cytoplasmic side; the sequence is KRLGP. Residues 399 to 419 traverse the membrane as a helical segment; sequence ALLLCFSLMAFDAGSIMFSVL. Topologically, residues 420–429 are extracellular; that stretch reads PVEQSYWKLN. A helical membrane pass occupies residues 430 to 450; it reads FAMQAILCFGMDLSFPASSII. Residues 451–461 lie on the Cytoplasmic side of the membrane; it reads LSDGLPMQYQG. The helical transmembrane segment at 462–482 threads the bilayer; that stretch reads MAGSLVNTVINYSASLCLGMG. Over 483–502 the chain is Extracellular; it reads GTVEHQINKSGNDLLKGYRA. A helical transmembrane segment spans residues 503–523; that stretch reads AVYLGVGLASLGVVISVTYML. Over 524–540 the chain is Cytoplasmic; the sequence is ENLWNRHRKSEDRSLEA.

This sequence belongs to the major facilitator superfamily.

It localises to the membrane. This is an uncharacterized protein from Saccharomyces cerevisiae (strain ATCC 204508 / S288c) (Baker's yeast).